The primary structure comprises 114 residues: Probable 4-amino-4-deoxy-L-arabinose-phosphoundecaprenol flippase subunit ArnE (114 aa).

A run of 2 helical transmembrane segments spans residues 41–61 (GWLW…LLVL) and 68–88 (VAYP…HFVF). The region spanning 43 to 112 (LWLALFSLGL…VIGGVLLLSR (70 aa)) is the EamA domain.

It belongs to the ArnE family. In terms of assembly, heterodimer of ArnE and ArnF.

The protein localises to the cell inner membrane. The protein operates within bacterial outer membrane biogenesis; lipopolysaccharide biosynthesis. Translocates 4-amino-4-deoxy-L-arabinose-phosphoundecaprenol (alpha-L-Ara4N-phosphoundecaprenol) from the cytoplasmic to the periplasmic side of the inner membrane. The sequence is that of Probable 4-amino-4-deoxy-L-arabinose-phosphoundecaprenol flippase subunit ArnE from Pseudomonas fluorescens (strain ATCC BAA-477 / NRRL B-23932 / Pf-5).